A 149-amino-acid chain; its full sequence is Nucleoside diphosphate kinase 1 (149 aa).

6 residues coordinate ATP: K9, F57, R85, T91, R102, and N112. H115 functions as the Pros-phosphohistidine intermediate in the catalytic mechanism.

As to quaternary structure, homohexamer. It depends on Mg(2+) as a cofactor.

It catalyses the reaction a 2'-deoxyribonucleoside 5'-diphosphate + ATP = a 2'-deoxyribonucleoside 5'-triphosphate + ADP. The enzyme catalyses a ribonucleoside 5'-diphosphate + ATP = a ribonucleoside 5'-triphosphate + ADP. In terms of biological role, major role in the synthesis of nucleoside triphosphates other than ATP. The ATP gamma phosphate is transferred to the NDP beta phosphate via a ping-pong mechanism, using a phosphorylated active-site intermediate. This NDK is microtubule-associated. The polypeptide is Nucleoside diphosphate kinase 1 (NDKR) (Oryza sativa subsp. indica (Rice)).